The sequence spans 235 residues: Small ribosomal subunit protein uS10m (235 aa).

A mitochondrion-targeting transit peptide spans 1 to 19; it reads MLRTSVRSPLLYRCLSKRF.

Belongs to the universal ribosomal protein uS10 family. Part of the mitochondrial small ribosomal subunit.

It is found in the mitochondrion. Its function is as follows. Involved in mitochondrial genome encoded proteins translation. Involved in the binding of tRNA to the ribosomes. This Candida glabrata (strain ATCC 2001 / BCRC 20586 / JCM 3761 / NBRC 0622 / NRRL Y-65 / CBS 138) (Yeast) protein is Small ribosomal subunit protein uS10m (RSM10).